The following is a 258-amino-acid chain: MASTAPIGVFDSGLGGISVAREIRRDMPNEHVLYFGDSANAPYGTKSPEQVRELSDVIVKRFVEQGVKAVVIACNTATSAAANELRDTYDIPIIGMEPALKVACDRGHGKRQRVIVAATPLTLRERKFAVLMDRFKADHTIFPEPCPGLVEIVEHGQLDDHDVVMRTLHQYFDQYDLSTIDSVVLGCTHFVFYRDYFRELLPDTAAIIDGNEGTVRHLGVVLESLGKLAPEDAEGSIDLANSDTSARIAQLAQSLLDR.

Substrate-binding positions include 11–12 (DS) and 43–44 (YG). Cys74 acts as the Proton donor/acceptor in catalysis. Residue 75–76 (NT) coordinates substrate. The Proton donor/acceptor role is filled by Cys187. Residue 188–189 (TH) coordinates substrate.

It belongs to the aspartate/glutamate racemases family.

It catalyses the reaction L-glutamate = D-glutamate. It participates in cell wall biogenesis; peptidoglycan biosynthesis. Its function is as follows. Provides the (R)-glutamate required for cell wall biosynthesis. The protein is Glutamate racemase of Bifidobacterium adolescentis (strain ATCC 15703 / DSM 20083 / NCTC 11814 / E194a).